A 427-amino-acid chain; its full sequence is Succinate--CoA ligase [ADP-forming] subunit beta, mitochondrial (427 aa).

Residues 1-30 constitute a mitochondrion transit peptide; that stretch reads MYSRKSLSLISKCGQLSRLNAQAALQARRH. Residues 39-284 form the ATP-grasp domain; the sequence is AQLLREYGIG…LSQEDPDEVK (246 aa). Residues Lys76 and 83–85 contribute to the ATP site; that span reads GRG. Ser102 carries the phosphoserine modification. Residue Glu144 participates in ATP binding. Mg(2+) is bound by residues Asn236 and Asp253. Phosphoserine is present on residues Ser263 and Ser276. Substrate is bound by residues Asn304 and 361–363; that span reads GIV.

Belongs to the succinate/malate CoA ligase beta subunit family. As to quaternary structure, heterodimer of an alpha and a beta subunit. Mg(2+) serves as cofactor.

It localises to the mitochondrion. It catalyses the reaction succinate + ATP + CoA = succinyl-CoA + ADP + phosphate. The protein operates within carbohydrate metabolism; tricarboxylic acid cycle; succinate from succinyl-CoA (ligase route): step 1/1. In terms of biological role, succinyl-CoA synthetase functions in the citric acid cycle (TCA), coupling the hydrolysis of succinyl-CoA to the synthesis of ATP and thus represents the only step of substrate-level phosphorylation in the TCA. The beta subunit provides nucleotide specificity of the enzyme and binds the substrate succinate, while the binding sites for coenzyme A and phosphate are found in the alpha subunit. The polypeptide is Succinate--CoA ligase [ADP-forming] subunit beta, mitochondrial (Saccharomyces cerevisiae (strain ATCC 204508 / S288c) (Baker's yeast)).